The following is a 215-amino-acid chain: Mite allergen Der p 7 (215 aa).

An N-terminal signal peptide occupies residues 1-17 (MMKLLLIAAAAFVAVSA). Asparagine 151 carries an N-linked (GlcNAc...) asparagine glycan.

It belongs to the mite group 7 allergen family.

Its subcellular location is the secreted. In Dermatophagoides pteronyssinus (European house dust mite), this protein is Mite allergen Der p 7 (DERP7).